The primary structure comprises 295 residues: MVVPESFQLDQEILLDAGAQLHRLKMYPYFDVAHYLLMIIEVRDDLGSAASIFSRKHPLSCWLSSMLMCFADAFLANFLLGEPVIAPFKRHDDIILATIIWYLVFYAPFDGIYKIAKITPVKCVLAVMKEVKRAYKVSHGVSHAAKLYPNSYIVQVLVGTAKGAGSGIVRTLEQLVRGVWLPTHNELLRPSFATKACVVAASVLALEKSGTYLTAPHDLVYLVIVGFFVYFKLSAVILHVTDPFAPIENLFCAIFMGGIWDAVSRALAASRDRRAAGAHSNENGSSISTPEKKDQ.

At 1 to 27 the chain is on the lumenal side; the sequence is MVVPESFQLDQEILLDAGAQLHRLKMY. Residues 28–45 traverse the membrane as a helical segment; the sequence is PYFDVAHYLLMIIEVRDD. Topologically, residues 46-56 are cytoplasmic; it reads LGSAASIFSRK. The discontinuously helical transmembrane segment at 57–80 threads the bilayer; it reads HPLSCWLSSMLMCFADAFLANFLL. Topologically, residues 81–89 are lumenal; the sequence is GEPVIAPFK. The chain crosses the membrane as a helical span at residues 90 to 107; sequence RHDDIILATIIWYLVFYA. Topologically, residues 108 to 119 are cytoplasmic; it reads PFDGIYKIAKIT. A helical membrane pass occupies residues 120–148; it reads PVKCVLAVMKEVKRAYKVSHGVSHAAKLY. The a 1,2-diacyl-sn-glycero-3-phospho-(1D-myo-inositol-4,5-bisphosphate) site is built by K129 and R133. Residues 149-150 are Lumenal-facing; the sequence is PN. A discontinuously helical membrane pass occupies residues 151–177; that stretch reads SYIVQVLVGTAKGAGSGIVRTLEQLVR. S166 contributes to the a 1,2-diacyl-sn-glycero-3-phospho-(1D-myo-inositol-4,5-bisphosphate) binding site. The Cytoplasmic portion of the chain corresponds to 178–188; the sequence is GVWLPTHNELL. The helical transmembrane segment at 189 to 210 threads the bilayer; sequence RPSFATKACVVAASVLALEKSG. Topologically, residues 211-215 are lumenal; that stretch reads TYLTA. Residues 216–239 traverse the membrane as a helical segment; it reads PHDLVYLVIVGFFVYFKLSAVILH. Over 240-295 the chain is Cytoplasmic; sequence VTDPFAPIENLFCAIFMGGIWDAVSRALAASRDRRAAGAHSNENGSSISTPEKKDQ. The segment at 274-295 is disordered; it reads RAAGAHSNENGSSISTPEKKDQ.

Belongs to the TMEM38 family. In terms of assembly, homotrimer; trimerization probably requires binding to phosphatidylinositol 4,5-bisphosphate (PIP2).

It localises to the endoplasmic reticulum membrane. In terms of biological role, potassium channel that mediates transmembrane potassium transport. Might be required for maintenance of rapid intracellular calcium release. May act as a counter-ion channel that functions in synchronization with calcium release from intracellular stores. Binds phosphatidylinositol 4,5-bisphosphate (PIP2). The protein is Trimeric intracellular cation channel type 1B.1 of Caenorhabditis elegans.